Consider the following 70-residue polypeptide: Large ribosomal subunit protein bL33m (70 aa).

It belongs to the bacterial ribosomal protein bL33 family. Component of the mitochondrial large ribosomal subunit (mt-LSU). Mature yeast 74S mitochondrial ribosomes consist of a small (37S) and a large (54S) subunit. The 37S small subunit contains a 15S ribosomal RNA (15S mt-rRNA) and 34 different proteins. The 54S large subunit contains a 21S rRNA (21S mt-rRNA) and 46 different proteins. bL33m stabilizes the tRNA acceptor stem in the E-site.

Its subcellular location is the mitochondrion. In terms of biological role, component of the mitochondrial ribosome (mitoribosome), a dedicated translation machinery responsible for the synthesis of mitochondrial genome-encoded proteins, including at least some of the essential transmembrane subunits of the mitochondrial respiratory chain. The mitoribosomes are attached to the mitochondrial inner membrane and translation products are cotranslationally integrated into the membrane. This chain is Large ribosomal subunit protein bL33m (MRPL39), found in Saccharomyces cerevisiae (strain ATCC 204508 / S288c) (Baker's yeast).